A 351-amino-acid polypeptide reads, in one-letter code: MITLAVDCMGGDHGPRVTLAACRAFLDHHPDARLLLVGQTDSLRSFTHARAALVAATEVVAMDDSVEVALRKKKDSSMRVAIQQVKDGAASAAVSAGNTGALMAIARYLLKTLDGIDRPAIATQLPNARGGATTVLDLGANVDCSAEHLLQFAVMGSALVSALQEGGEPTVGLLNIGQEAIKGSEIIKRAGELLRSAAQCGDLNFHGNVEGDDIFKGSVDIVVCDGFVGNVALKASEGLAAMIIGALKIEFSRHVFAKMAAIVAYPVLQALMKRMDYRRYNGAALLGLRGLVFKSHGSADAMAFEQALNRAYDAARNNLLDRVRARIAHAAPLLAPADAQPKPDIAATTHR.

It belongs to the PlsX family. As to quaternary structure, homodimer. Probably interacts with PlsY.

The protein localises to the cytoplasm. The enzyme catalyses a fatty acyl-[ACP] + phosphate = an acyl phosphate + holo-[ACP]. The protein operates within lipid metabolism; phospholipid metabolism. Its function is as follows. Catalyzes the reversible formation of acyl-phosphate (acyl-PO(4)) from acyl-[acyl-carrier-protein] (acyl-ACP). This enzyme utilizes acyl-ACP as fatty acyl donor, but not acyl-CoA. The polypeptide is Phosphate acyltransferase (Verminephrobacter eiseniae (strain EF01-2)).